Consider the following 309-residue polypeptide: Mitochondrial brown fat uncoupling protein 1 (309 aa).

At 2–10 the chain is on the mitochondrial intermembrane side; that stretch reads VGHTESDVP. Residues 11–32 traverse the membrane as a helical segment; that stretch reads PTMAVKIFSAGVAACVADIITF. 3 Solcar repeats span residues 11–106, 113–203, and 212–297; these read PTMA…VQEF, ASLG…MKEA, and DDVP…LKQE. Residues 33–77 lie on the Mitochondrial matrix side of the membrane; sequence PLDTAKVRLQVGSAIQGECLISSAIRYKGVLGTIITLAKTEGPVK. Lys60 lines the fatty acid 16:0 pocket. A helical membrane pass occupies residues 78 to 100; the sequence is LYSGLPAGLQRQISFASLRIGLY. The Mitochondrial intermembrane portion of the chain corresponds to 101–118; the sequence is DTVQEFFTTGKEASLGSK. A helical transmembrane segment spans residues 119-135; sequence ISAGLMTGGVAVFIGQP. At 136–180 the chain is on the mitochondrial matrix side; sequence TEVVKVRLQAQSHLHGPKPRYTGTYNAYRIIATTEGLTGLWKGTT. The helical transmembrane segment at 181 to 197 threads the bilayer; the sequence is PNLTRNVIINCTELVTY. The Mitochondrial intermembrane portion of the chain corresponds to 198–214; the sequence is DLMKEALVKNKLLADDV. A helical membrane pass occupies residues 215-234; it reads PCHFVSAVVAGFCTTVLSSP. Topologically, residues 235–268 are mitochondrial matrix; the sequence is VDVVKTRFVNSSPGQYTSVPNCAMMMLTREGPSA. A Cysteine sulfenic acid (-SOH) modification is found at Cys256. The helical transmembrane segment at 269–291 threads the bilayer; sequence FFKGFVPSFLRLGSWNIIMFVCF. A fatty acid 16:0-binding site is contributed by Lys271. Residues 292–309 are Mitochondrial intermembrane-facing; that stretch reads EQLKQELMKSRHTMDCAT.

It belongs to the mitochondrial carrier (TC 2.A.29) family. In terms of assembly, most probably functions as a monomer. Binds one purine nucleotide per monomer. However, has also been suggested to function as a homodimer or a homotetramer. Tightly associates with cardiolipin in the mitochondrion inner membrane; may stabilize and regulate its activity. May undergo sulfenylation upon cold exposure. May increase the sensitivity of UCP1 thermogenic function to the activation by noradrenaline probably through structural effects. In terms of processing, may undergo ubiquitin-mediated proteasomal degradation.

Its subcellular location is the mitochondrion inner membrane. The enzyme catalyses H(+)(in) = H(+)(out). Its activity is regulated as follows. Has no constitutive proton transporter activity and has to be activated by long-chain fatty acids/LCFAs. Inhibited by purine nucleotides. Both purine nucleotides and LCFAs bind the cytosolic side of the transporter and directly compete to activate or inhibit it. Activated by noradrenaline and reactive oxygen species. Despite lacking canonical translational encoding for selenocysteine, a small pool of the protein has been observed to selectively incorporate selenocysteine at 'Cys-256'. Selenocysteine-modified protein is highly sensitive to redox modification and may constitute a pool of protein highly sensitive to activation by elevated levels of reactive oxygen species (ROS). Functionally, mitochondrial protein responsible for thermogenic respiration, a specialized capacity of brown adipose tissue and beige fat that participates in non-shivering adaptive thermogenesis to temperature and diet variations and more generally to the regulation of energy balance. Functions as a long-chain fatty acid/LCFA and proton symporter, simultaneously transporting one LCFA and one proton through the inner mitochondrial membrane. However, LCFAs remaining associated with the transporter via their hydrophobic tails, it results in an apparent transport of protons activated by LCFAs. Thereby, dissipates the mitochondrial proton gradient and converts the energy of substrate oxydation into heat instead of ATP. Regulates the production of reactive oxygen species/ROS by mitochondria. In Bos taurus (Bovine), this protein is Mitochondrial brown fat uncoupling protein 1.